A 269-amino-acid polypeptide reads, in one-letter code: tRNA pseudouridine synthase A (269 aa).

The active-site Nucleophile is Asp-51. Tyr-109 serves as a coordination point for substrate.

This sequence belongs to the tRNA pseudouridine synthase TruA family. As to quaternary structure, homodimer.

It catalyses the reaction uridine(38/39/40) in tRNA = pseudouridine(38/39/40) in tRNA. Functionally, formation of pseudouridine at positions 38, 39 and 40 in the anticodon stem and loop of transfer RNAs. The sequence is that of tRNA pseudouridine synthase A from Histophilus somni (strain 129Pt) (Haemophilus somnus).